A 148-amino-acid chain; its full sequence is Putative pre-16S rRNA nuclease (148 aa).

Belongs to the YqgF nuclease family.

Its subcellular location is the cytoplasm. Functionally, could be a nuclease involved in processing of the 5'-end of pre-16S rRNA. The protein is Putative pre-16S rRNA nuclease of Nitrosomonas europaea (strain ATCC 19718 / CIP 103999 / KCTC 2705 / NBRC 14298).